A 348-amino-acid chain; its full sequence is Rhodopsin (348 aa).

Residues 1–33 lie on the Extracellular side of the membrane; sequence TEGPFFYIPMVNTSGVVRSPYEYPQYYLVNPAA. N-linked (GlcNAc...) asparagine glycosylation is present at Asn-12. Residues 34–58 form a helical membrane-spanning segment; it reads YAILGAYMFFLIIIGFPVNFMTLYV. Residues 59 to 70 are Cytoplasmic-facing; the sequence is TLEHKKLRTPLN. A helical membrane pass occupies residues 71–93; that stretch reads YILLNLAVADLFMVIGGFTTTMY. The Extracellular portion of the chain corresponds to 94–107; that stretch reads SSMHGYFVLGRLGC. Cys-107 and Cys-184 are oxidised to a cystine. The chain crosses the membrane as a helical span at residues 108–130; sequence NMEGFSATLGGMISLWSLAVLAI. The short motif at 131-133 is the 'Ionic lock' involved in activated form stabilization element; sequence ERW. The Cytoplasmic portion of the chain corresponds to 131-149; the sequence is ERWVVVCKPISNFRFGENH. The helical transmembrane segment at 150–170 threads the bilayer; the sequence is AIMGVSLTWFMALACTVPPLV. Over 171 to 199 the chain is Extracellular; sequence GWSRYIPEGMQCSCGIDYYTRAEGFNNES. N-linked (GlcNAc...) asparagine glycosylation is present at Asn-197. The helical transmembrane segment at 200 to 221 threads the bilayer; that stretch reads FVLYMFFCHFLVPLVIIFFCYG. Over 222 to 249 the chain is Cytoplasmic; that stretch reads RLLCAVKEAAAAQQESETTQRAEREVTR. The helical transmembrane segment at 250–271 threads the bilayer; the sequence is MVIIMVIGFLVCWLPYASVAWF. Over 272–283 the chain is Extracellular; it reads IFTHQGSEFGPL. Residues 284–305 form a helical membrane-spanning segment; sequence FMTIPAFFAKSSSIYNPMIYIC. Lys-293 is subject to N6-(retinylidene)lysine. Residues 306 to 348 are Cytoplasmic-facing; that stretch reads MNKQFRNCMITTLFCGKNPFEGEEEGASSTKTEASSASSVSPA. Cys-320 is lipidated: S-palmitoyl cysteine. Residues 327 to 348 form a disordered region; it reads GEEEGASSTKTEASSASSVSPA. The segment covering 332 to 348 has biased composition (low complexity); it reads ASSTKTEASSASSVSPA.

This sequence belongs to the G-protein coupled receptor 1 family. Opsin subfamily. Post-translationally, phosphorylated on some or all of the serine and threonine residues present in the C-terminal region. In terms of processing, contains one covalently linked retinal chromophore.

It is found in the membrane. The protein resides in the cell projection. The protein localises to the cilium. Its subcellular location is the photoreceptor outer segment. In terms of biological role, photoreceptor required for image-forming vision at low light intensity. While most salt water fish species use retinal as chromophore, most freshwater fish use 3-dehydroretinal, or a mixture of retinal and 3-dehydroretinal. Light-induced isomerization of 11-cis to all-trans retinal triggers a conformational change that activates signaling via G-proteins. Subsequent receptor phosphorylation mediates displacement of the bound G-protein alpha subunit by arrestin and terminates signaling. The sequence is that of Rhodopsin (rho) from Sargocentron punctatissimum (Speckled squirrelfish).